A 307-amino-acid polypeptide reads, in one-letter code: Ribonuclease Z (307 aa).

7 residues coordinate Zn(2+): His-61, His-63, Asp-65, His-66, His-138, Asp-207, and His-265. Catalysis depends on Asp-65, which acts as the Proton acceptor.

The protein belongs to the RNase Z family. In terms of assembly, homodimer. The cofactor is Zn(2+).

The catalysed reaction is Endonucleolytic cleavage of RNA, removing extra 3' nucleotides from tRNA precursor, generating 3' termini of tRNAs. A 3'-hydroxy group is left at the tRNA terminus and a 5'-phosphoryl group is left at the trailer molecule.. Functionally, zinc phosphodiesterase, which displays some tRNA 3'-processing endonuclease activity. Probably involved in tRNA maturation, by removing a 3'-trailer from precursor tRNA. In Methanothermobacter thermautotrophicus (strain ATCC 29096 / DSM 1053 / JCM 10044 / NBRC 100330 / Delta H) (Methanobacterium thermoautotrophicum), this protein is Ribonuclease Z.